Consider the following 49-residue polypeptide: Agglutinin-1 (49 aa).

Homooligomer. Post-translationally, glycosylated.

Beta-galactoside specific lectin. Has a hemagglutinating activity on erythrocytes. This Pomacea flagellata (Apple snail) protein is Agglutinin-1.